Reading from the N-terminus, the 329-residue chain is Sex comb on midleg-like protein 1 (329 aa).

Phosphoserine is present on residues Ser-138 and Ser-238. The interval Ser-138 to Pro-157 is disordered. Residues Trp-258 to Lys-325 enclose the SAM domain.

It belongs to the SCM family. As to expression, ubiquitous. Expressed in fetal and adult tissues.

The protein localises to the nucleus. Functionally, putative Polycomb group (PcG) protein. PcG proteins act by forming multiprotein complexes, which are required to maintain the transcriptionally repressive state of homeotic genes throughout development. May be involved in spermatogenesis during sexual maturation. In Homo sapiens (Human), this protein is Sex comb on midleg-like protein 1 (SCML1).